We begin with the raw amino-acid sequence, 135 residues long: ATP synthase epsilon chain (135 aa).

Positions 101–122 (TAVTKLEGQPSTPEKVKAQQLF) are disordered.

Belongs to the ATPase epsilon chain family. As to quaternary structure, F-type ATPases have 2 components, CF(1) - the catalytic core - and CF(0) - the membrane proton channel. CF(1) has five subunits: alpha(3), beta(3), gamma(1), delta(1), epsilon(1). CF(0) has three main subunits: a, b and c.

The protein localises to the cellular thylakoid membrane. Functionally, produces ATP from ADP in the presence of a proton gradient across the membrane. This is ATP synthase epsilon chain from Synechococcus sp. (strain CC9311).